We begin with the raw amino-acid sequence, 446 residues long: Transcription factor Dp-2 (446 aa).

Threonine 2 bears the N-acetylthreonine mark. Phosphoserine; by CDK2 is present on residues serine 24 and serine 42. The interaction with CEBPA stretch occupies residues 60 to 82 (PQMIISTPQRIANSGSVLIGNPY). The short motif at 103 to 118 (SDRKRAREFIDSDFSE) is the Nuclear localization signal element. Serine 122 is modified (phosphoserine). Residues 129-210 (GKGLRHFSMK…PTGKKRNQVD (82 aa)) mediate DNA binding. Positions 176 to 210 (DQENIRRRVYDALNVLMAMNIISSLPTGKKRNQVD) match the DEF box motif. A dimerization region spans residues 219–292 (NLEIEKQRRI…RKTVIDCSIS (74 aa)). The DCB1 stretch occupies residues 229 to 261 (ERIKQKRAQLQELLLQQIAFKNLVQRNRQNEQQ). Residues 274–330 (LPFIIINTSRKTVIDCSISSDKFEYLFNFDNTFEIHDDIEVLKRMGMSFGLESGKCS) form a DCB2 region. The tract at residues 404-446 (LPASNSHQSSSAASHFSESRGETPCSFNDEDEEDEEEDPSSPE) is disordered. Low complexity predominate over residues 406-419 (ASNSHQSSSAASHF). Residues 431–446 (NDEDEEDEEEDPSSPE) show a composition bias toward acidic residues.

The protein belongs to the E2F/DP family. Component of the DRTF1/E2F transcription factor complex. Forms heterodimers with E2F family members. The complex can interact with hypophosphorylated retinoblastoma protein RB1 and related proteins (RBL1 and RBL2) that inhibit the E2F transactivation domain. During the cell cycle, RB becomes phosphorylated in mid-to-late G1 phase, detaches from the DRTF1/E2F complex rendering E2F transcriptionally active. Interacts with GMCL. Component of the DREAM complex (also named LINC complex) at least composed of E2F4, E2F5, LIN9, LIN37, LIN52, LIN54, MYBL1, MYBL2, RBL1, RBL2, RBBP4, TFDP1 and TFDP2. The complex exists in quiescent cells where it represses cell cycle-dependent genes. It dissociates in S phase when LIN9, LIN37, LIN52 and LIN54 form a subcomplex that binds to MYBL2. The complex TFDP2:E2F1 interacts with CEBPA; the interaction prevents CEBPA binding to target gene promoters and represses its transcriptional activity. Phosphorylation by E2F1-bound cyclin A-CDK2, in the S phase, inhibits E2F-mediated DNA binding and transactivation. Expressed in all tissues examined. Highest levels in spleen and heart.

It is found in the nucleus. Its function is as follows. Can stimulate E2F-dependent transcription. Binds DNA cooperatively with E2F family members through the E2 recognition site, 5'-TTTC[CG]CGC-3', found in the promoter region of a number of genes whose products are involved in cell cycle regulation or in DNA replication. The TFDP2:E2F complex functions in the control of cell-cycle progression from G1 to S phase. The E2F1:DP complex appears to mediate both cell proliferation and apoptosis. Blocks adipocyte differentiation by repressing CEBPA binding to its target gene promoters. This chain is Transcription factor Dp-2 (Tfdp2), found in Mus musculus (Mouse).